A 321-amino-acid chain; its full sequence is tRNA U34 carboxymethyltransferase (321 aa).

Carboxy-S-adenosyl-L-methionine contacts are provided by residues Lys-90, Trp-104, Lys-109, Gly-129, 151-153, 180-181, Met-195, Tyr-199, and Arg-314; these read DPT and IE.

This sequence belongs to the class I-like SAM-binding methyltransferase superfamily. CmoB family. As to quaternary structure, homotetramer.

It catalyses the reaction carboxy-S-adenosyl-L-methionine + 5-hydroxyuridine(34) in tRNA = 5-carboxymethoxyuridine(34) in tRNA + S-adenosyl-L-homocysteine + H(+). Functionally, catalyzes carboxymethyl transfer from carboxy-S-adenosyl-L-methionine (Cx-SAM) to 5-hydroxyuridine (ho5U) to form 5-carboxymethoxyuridine (cmo5U) at position 34 in tRNAs. This chain is tRNA U34 carboxymethyltransferase, found in Haemophilus influenzae (strain ATCC 51907 / DSM 11121 / KW20 / Rd).